Reading from the N-terminus, the 66-residue chain is U8-myrmicitoxin-Tb1a (66 aa).

Positions 1–26 (MKLSFLSLAFAVIFVMAIMYAPQVEA) are cleaved as a signal peptide. Residues 27–50 (KASADADADADAAASADALAKASA) constitute a propeptide that is removed on maturation.

As to expression, expressed by the venom gland.

It is found in the secreted. In vivo, this neurotoxin paralyzes about 50% of blowflies (L.caesar) one hour after intrathoracic injection, when tested at high doses (54 nmol/g). This Tetramorium bicarinatum (Tramp ant) protein is U8-myrmicitoxin-Tb1a.